The primary structure comprises 227 residues: uncharacterized protein (227 aa).

Transmembrane regions (helical) follow at residues L25–F45, A49–I69, T80–L100, K111–A131, F144–I164, P165–W185, and A201–L221.

Its subcellular location is the cell membrane. This is an uncharacterized protein from Neisseria meningitidis serogroup B (strain ATCC BAA-335 / MC58).